The chain runs to 412 residues: Poly-beta-1,6-N-acetyl-D-glucosamine synthase (412 aa).

4 helical membrane passes run 6–26 (FLLF…IYFY), 298–318 (IISI…FITA), 332–352 (IFLL…TVAL), and 366–386 (LIFV…VVLV).

This sequence belongs to the glycosyltransferase 2 family.

Its subcellular location is the cell membrane. In terms of biological role, N-acetylglucosaminyltransferase that catalyzes the polymerization of single monomer units of UDP-N-acetylglucosamine to produce the linear homomer poly-beta-1,6-N-acetyl-D-glucosamine (PNAG, also referred to as PIA), a biofilm adhesin polysaccharide. Requires IcaD for full activity. The chain is Poly-beta-1,6-N-acetyl-D-glucosamine synthase (icaA) from Staphylococcus aureus (strain NCTC 8325 / PS 47).